Consider the following 256-residue polypeptide: DNA repair protein RecO (256 aa).

It belongs to the RecO family.

Functionally, involved in DNA repair and RecF pathway recombination. The protein is DNA repair protein RecO of Rhizobium etli (strain ATCC 51251 / DSM 11541 / JCM 21823 / NBRC 15573 / CFN 42).